The sequence spans 154 residues: Large ribosomal subunit protein uL23z (154 aa).

This sequence belongs to the universal ribosomal protein uL23 family.

In terms of biological role, binds to a specific region on the 26S rRNA. This chain is Large ribosomal subunit protein uL23z (RPL23AA), found in Arabidopsis thaliana (Mouse-ear cress).